Reading from the N-terminus, the 311-residue chain is Thioredoxin reductase (311 aa).

FAD is bound at residue 33 to 43; that stretch reads EGFFSGISGGQ. A disulfide bond links C138 and C141. FAD is bound at residue 283-292; the sequence is DVQDKYYRQA.

This sequence belongs to the class-II pyridine nucleotide-disulfide oxidoreductase family. In terms of assembly, homodimer. The cofactor is FAD.

It localises to the cytoplasm. The catalysed reaction is [thioredoxin]-dithiol + NADP(+) = [thioredoxin]-disulfide + NADPH + H(+). This Chlamydia pneumoniae (Chlamydophila pneumoniae) protein is Thioredoxin reductase (trxB).